We begin with the raw amino-acid sequence, 129 residues long: Small ribosomal subunit protein uS9 (129 aa).

This sequence belongs to the universal ribosomal protein uS9 family.

The chain is Small ribosomal subunit protein uS9 from Helicobacter acinonychis (strain Sheeba).